The following is a 188-amino-acid chain: Elongation factor P (188 aa).

Belongs to the elongation factor P family.

Its subcellular location is the cytoplasm. Its pathway is protein biosynthesis; polypeptide chain elongation. Involved in peptide bond synthesis. Stimulates efficient translation and peptide-bond synthesis on native or reconstituted 70S ribosomes in vitro. Probably functions indirectly by altering the affinity of the ribosome for aminoacyl-tRNA, thus increasing their reactivity as acceptors for peptidyl transferase. In Gluconobacter oxydans (strain 621H) (Gluconobacter suboxydans), this protein is Elongation factor P.